The following is a 116-amino-acid chain: Ly-6/neurotoxin-like protein 1 (116 aa).

The signal sequence occupies residues 1–20; the sequence is MTPLLTLILVVLMGLPLAQA. The 85-residue stretch at 21–105 folds into the UPAR/Ly6 domain; it reads LDCHVCAYNG…LATPATLALA (85 aa). Cystine bridges form between Cys-23–Cys-46, Cys-26–Cys-33, Cys-39–Cys-64, Cys-68–Cys-85, and Cys-86–Cys-91. Residue Asn-92 is the site of GPI-anchor amidated asparagine attachment. Positions 93 to 116 are cleaved as a propeptide — removed in mature form; the sequence is GAGLATPATLALAPILLATLWGLL.

Interacts with nAChRs containing alpha-4:beta-2 (CHRNA4:CHRNB2) and alpha-7 (CHRNA7) subunits. Interacts with CHRNA4 probably in the endoplasmic reticulum prior to nAChR pentameric assembly. Interacts with KCNA2/Potassium voltage-gated channel subfamily A member 2.

The protein localises to the cell membrane. It localises to the cell projection. It is found in the dendrite. Its subcellular location is the endoplasmic reticulum. In terms of biological role, acts in different tissues through interaction to nicotinic acetylcholine receptors (nAChRs). The proposed role as modulator of nAChR activity seems to be dependent on the nAChR subtype and stoichiometry, and to involve an effect on nAChR trafficking and its cell surface expression, and on single channel properties of the nAChR inserted in the plasma membrane. Modulates functional properties of nicotinic acetylcholine receptors (nAChRs) to prevent excessive excitation, and hence neurodegeneration. Enhances desensitization by increasing both the rate and extent of desensitization of alpha-4:beta-2-containing nAChRs and slowing recovery from desensitization. Promotes large amplitude ACh-evoked currents through alpha-4:beta-2 nAChRs. Is involved in regulation of the nAChR pentameric assembly in the endoplasmic reticulum. Shifts stoichiometry from high sensitivity alpha-4(2):beta-2(3) to low sensitivity alpha-4(3):beta-2(2) nAChR. In vitro modulates alpha-3:beta-4-containing nAChRs. Reduces cell surface expression of (alpha-3:beta-4)(2):beta-4 and (alpha-3:beta-4)(2):alpha-5 nAChRs suggesting an interaction with nAChR alpha-3(-):(+)beta-4 subunit interfaces and an allosteric mode. Corresponding single channel effects characterized by decreased unitary conductance, altered burst proportions and enhanced desensitization/inactivation seem to depend on nAChR alpha:alpha subunit interfaces and are greater in (alpha-3:beta-2)(2):alpha-3 when compared to (alpha-3:beta-2)(2):alpha-5 nAChRs. Prevents plasticity in the primary visual cortex late in life. The protein is Ly-6/neurotoxin-like protein 1 of Pan troglodytes (Chimpanzee).